A 334-amino-acid polypeptide reads, in one-letter code: Iron-uptake system permease protein FeuB (334 aa).

9 helical membrane passes run 9-29 (IILI…ILYG), 63-83 (AAGA…MQGI), 91-111 (PSIM…MVLL), 119-139 (MMIY…GLAA), 150-170 (LAII…AMSI), 191-211 (PDFL…AISL), 243-263 (VIIL…VGLV), 281-301 (PCSC…SRFI), and 305-325 (FETP…LYLI).

Belongs to the binding-protein-dependent transport system permease family. FecCD subfamily. In terms of assembly, the complex is composed of one ATP-binding protein (YusV), two transmembrane proteins (FeuB and FeuC) and a solute-binding protein (FeuA).

The protein resides in the cell membrane. It localises to the membrane raft. Its function is as follows. Involved in the uptake of iron. Probably responsible for the translocation of the substrate across the membrane. In terms of biological role, part of the ABC transporter complex FeuABC/YusV involved in import of the catecholate siderophores bacillibactin and enterobactin. The sequence is that of Iron-uptake system permease protein FeuB (feuB) from Bacillus subtilis (strain 168).